We begin with the raw amino-acid sequence, 506 residues long: Notoamide biosynthesis cluster transcriptional coactivator notQ' (506 aa).

The segment at residues 11 to 38 (CLVCRHRKVACDRGRPQCGLCRKNGFDC) is a DNA-binding region (zn(2)-C6 fungal-type). The interval 73–102 (GRLSQSQPSQPATERDDLATTPSTGRLAPP) is disordered. Over residues 75–84 (LSQSQPSQPA) the composition is skewed to polar residues.

It is found in the nucleus. In terms of biological role, transcription factor that probably regulates the expression of the gene cluster that mediates the biosynthesis of notoamide, a fungal indole alkaloid that belongs to a family of natural products containing a characteristic bicyclo[2.2.2]diazaoctane core. This chain is Notoamide biosynthesis cluster transcriptional coactivator notQ', found in Aspergillus versicolor.